A 24-amino-acid chain; its full sequence is Waglerin-4 (24 aa).

C11 and C15 are joined by a disulfide.

Belongs to the waglerin family. As to quaternary structure, monomer. Expressed by the venom gland.

The protein resides in the secreted. Functionally, waglerin-2 selectively blocks the epsilon subunit of muscle nicotinic acetylcholine receptor (nAChR). Also has effects on rodent ionotropic GABA(A) receptors (GABR), since it potentiates I(GABA) in some neurons and depresses I(GABA) in others. In mice, it elicits tachypnea, ocular proptosis, rapid collapse and spasms, whereas no toxic effects on respiration and blood pressure are observed in rats. Waglerin-4 selectively blocks the epsilon subunit of muscle nicotinic acetylcholine receptor. It elicits tachypnea, ocular proptosis, rapid collapse and spasms in mice. It causes death by respiratory failure. This is Waglerin-4 from Tropidolaemus wagleri (Wagler's pit viper).